The chain runs to 513 residues: 2,3-bisphosphoglycerate-independent phosphoglycerate mutase (513 aa).

Residues Asp-12 and Ser-62 each coordinate Mn(2+). The active-site Phosphoserine intermediate is the Ser-62. Substrate-binding positions include His-123, 153-154, Arg-185, Arg-191, 260-263, and Lys-333; these read RD and RPDR. Mn(2+)-binding residues include Asp-400, His-404, Asp-441, His-442, and His-460.

Belongs to the BPG-independent phosphoglycerate mutase family. As to quaternary structure, monomer. Requires Mn(2+) as cofactor.

The catalysed reaction is (2R)-2-phosphoglycerate = (2R)-3-phosphoglycerate. The protein operates within carbohydrate degradation; glycolysis; pyruvate from D-glyceraldehyde 3-phosphate: step 3/5. Functionally, catalyzes the interconversion of 2-phosphoglycerate and 3-phosphoglycerate. In Clostridium tetani (strain Massachusetts / E88), this protein is 2,3-bisphosphoglycerate-independent phosphoglycerate mutase.